The primary structure comprises 430 residues: Functional amyloid transporter FapF (430 aa).

The N-terminal stretch at 1–24 (MHRSLSLRAVVCLSTLLPASLLYA) is a signal peptide. Residues 25-131 (APDVDIETLK…EASGFFGNGK (107 aa)) are Periplasmic-facing. Positions 29–64 (DIETLKQELLELKQRYEAQQKALAVLEQRVRQVEDQ) form a coiled coil. The interval 62-114 (EDQPATPAPKRLAKSPADFKQSGSTVAASSGTGGATGGSSYGQSLKDDSEPAQ) is disordered. Gly residues predominate over residues 92–101 (GTGGATGGSS). The tract at residues 113 to 125 (AQSVSNLYNEASG) is alpha helical plug. The beta stranded transmembrane segment at 132 to 142 (FSFETGITYAR) threads the bilayer. The Extracellular portion of the chain corresponds to 143 to 172 (YDARQLTLNGFLALDSIFLGNINLDRIKAD). The chain crosses the membrane as a beta stranded span at residues 173-183 (NWTLDLTGRYN). The Periplasmic segment spans residues 184-189 (LDNRWQ). Residues 190–198 (FDVNVPVVY) form a beta stranded membrane-spanning segment. Residues 199–224 (RESTYQSGGASGGDPQATSEESVSRD) are Extracellular-facing. The segment at 203–223 (YQSGGASGGDPQATSEESVSR) is disordered. Residues 225–238 (PTIGDVNFGIAYKF) traverse the membrane as a beta stranded segment. Residues 239–246 (LDESATMP) lie on the Periplasmic side of the membrane. The chain crosses the membrane as a beta stranded span at residues 247–256 (DAVVSVRVKA). Topologically, residues 257-288 (PTGKEPFGIKLVRSTANDNLYVPESLPTGNGV) are extracellular. Residues 289–298 (WSITPGLSLV) form a beta stranded membrane-spanning segment. Over 299–304 (KTFDPA) the chain is Periplasmic. Residues 305-314 (VLFGSVSYTH) traverse the membrane as a beta stranded segment. At 315–339 (NLEDSFDDISSDVNQKVGGKVRLGD) the chain is on the extracellular side. A beta stranded membrane pass occupies residues 340 to 348 (SFQFGVGVA). Residues 349-356 (FALNERMS) lie on the Periplasmic side of the membrane. A beta stranded membrane pass occupies residues 357–365 (MSFSVSDLI). Over 366-386 (QRKSKLKPDGGGWQSIVSSDA) the chain is Extracellular. The beta stranded transmembrane segment at 387–397 (NAGYFNVGMTI) threads the bilayer. Residues 398 to 404 (AASENLT) are Periplasmic-facing. Residues 405–412 (IVPNLAIG) traverse the membrane as a beta stranded segment. Residues 413-419 (MTDDAPD) lie on the Extracellular side of the membrane. The chain crosses the membrane as a beta stranded span at residues 420-428 (FTFSLKFPY). At 429–430 (YF) the chain is on the periplasmic side.

This sequence belongs to the amyloid transporter (TC 9.B.153) family. Homotrimer.

Its subcellular location is the cell outer membrane. Its function is as follows. Transports fibril components across the outer membrane. Upon overexpression of the endogenous six-gene locus (fapA-fapF) in situ cells form large clumps during liquid growth, make large amounts of biofilm and produce amyloid fibrils. Expression of the 6 gene operon in E.coli strain BL21(DE3) induces flocculation and biofilm formation with copious extracellular fibrils. The protein is Functional amyloid transporter FapF of Pseudomonas fluorescens.